Here is a 2813-residue protein sequence, read N- to C-terminus: von Willebrand factor (2813 aa).

A signal peptide spans 1–22 (MSPTRLVRVLLALALILPGKLC). The propeptide occupies 23–763 (TKGTVGRSSM…SSPRSHRSKR (741 aa)). In terms of domain architecture, VWFD 1 spans 33 to 201 (ARCSLFGGDF…ALSSGEQRCK (169 aa)). Disulfide bonds link Cys35–Cys162 and Cys57–Cys200. N-linked (GlcNAc...) asparagine glycosylation is found at Asn99, Asn156, and Asn211. In terms of domain architecture, TIL 1 spans 295–348 (CPAGMEYKECVSPCTRTCQSLHVKEVCQEQCVDGCSCPEGQLLDEGHCVGSAEC). Residues 386–560 (GECLVTGQSH…NAWKLLGACE (175 aa)) enclose the VWFD 2 domain. Cystine bridges form between Cys388–Cys524, Cys410–Cys559, and Cys432–Cys440. Residues 531-533 (RGD) carry the Cell attachment site motif. TIL domains lie at 652–707 (CPQG…KAQC) and 776–827 (CPAD…LERC). Asn666 is a glycosylation site (N-linked (GlcNAc...) asparagine). Positions 698–700 (RGD) match the Cell attachment site motif. Positions 764-787 (SLSCRPPMVKLVCPADNPRAEGLE) are amino-terminal. 3 disulfide bridges follow: Cys767–Cys808, Cys776–Cys804, and Cys810–Cys821. The tract at residues 788-833 (CAKTCQNYDLQCMSTGCVSGCLCPQGMVRHENRCVALERCPCFHQG) is E1. Residues 826 to 853 (RCPCFHQGQEYAPGETVKIDCNTCVCRD) are CX. An N-linked (GlcNAc...) asparagine glycan is attached at Asn857. The VWFD 3 domain maps to 865–1032 (ATCSAIGMAH…NSWKVNPQCA (168 aa)). Disulfide bonds link Cys867–Cys996, Cys889–Cys1031, Cys898–Cys993, Cys914–Cys921, Cys1060–Cys1084, Cys1071–Cys1111, Cys1089–Cys1091, Cys1126–Cys1130, Cys1149–Cys1169, Cys1153–Cys1165, and Cys1196–Cys1199. Residues 1146–1196 (YNSCAPACPITCQHPEPLACPVQCVEGCHAHCPPGKILDELLQTCIDPEDC) enclose the TIL 4 domain. An N-linked (GlcNAc...) asparagine glycan is attached at Asn1231. 2 cysteine pairs are disulfide-bonded: Cys1234–Cys1237 and Cys1272–Cys1458. 2 consecutive VWFA domains span residues 1277–1453 (DLVF…RDEI) and 1498–1665 (DVVF…PDLV). 2 N-linked (GlcNAc...) asparagine glycosylation sites follow: Asn1515 and Asn1574. Disulfide bonds link Cys1669-Cys1670, Cys1686-Cys1872, Cys1879-Cys1904, Cys1899-Cys1940, Cys1927-Cys2088, Cys1950-Cys2085, Cys1972-Cys2123, and Cys1993-Cys2001. One can recognise a VWFA 3 domain in the interval 1691 to 1871 (DVVLLLDGSS…TLGNSFFHKL (181 aa)). In terms of domain architecture, VWFD 4 spans 1948 to 2124 (CVCMGSSTRH…TVQQLGKTCQ (177 aa)). The interval 2216–2261 (CPRLCEGNTSSCGDQPSEGCFCPPNQVMLEGSCVPEEACTQCISED) is E2. N-linked (GlcNAc...) asparagine glycosylation is found at Asn2223, Asn2290, Asn2357, and Asn2400. The VWFC 1 domain occupies 2255 to 2328 (TQCISEDGVR…CCPEYECVCD (74 aa)). Positions 2429–2495 (KVCVHRGTIY…HEGECCGRCL (67 aa)) constitute a VWFC 2 domain. The Cell attachment site motif lies at 2507 to 2509 (RGD). N-linked (GlcNAc...) asparagine glycosylation is found at Asn2546 and Asn2585. Residues 2580–2645 (EACLLNGTII…NQGECCGRCL (66 aa)) enclose the VWFC 3 domain. 4 disulfides stabilise this stretch: Cys2724–Cys2774, Cys2739–Cys2788, Cys2750–Cys2804, and Cys2754–Cys2806. The 89-residue stretch at 2724–2812 (CKDIIAKLQR…QCRCSPRKCS (89 aa)) folds into the CTCK domain. The N-linked (GlcNAc...) asparagine glycan is linked to Asn2790.

Multimeric. Interacts with F8. In terms of processing, all cysteine residues are involved in intrachain or interchain disulfide bonds. Post-translationally, N- and O-glycosylated. As to expression, plasma.

The protein resides in the secreted. It is found in the extracellular space. Its subcellular location is the extracellular matrix. Its function is as follows. Important in the maintenance of hemostasis, it promotes adhesion of platelets to the sites of vascular injury by forming a molecular bridge between sub-endothelial collagen matrix and platelet-surface receptor complex, glycoprotein Ibalpha/IX/V. Also acts as a chaperone for coagulation factor VIII, delivering it to the site of injury, stabilizing its heterodimeric structure and protecting it from premature clearance from plasma. The protein is von Willebrand factor (VWF) of Canis lupus familiaris (Dog).